The following is a 227-amino-acid chain: MTMTSTTTKAMAMAAAVLAAAAVAATNAQTCGKQNDGMICPHNLCCSQFGYCGLGRDYCGTGCQSGACCSSQRCGSQGGGATCSNNQCCSQYGYCGFGSEYCGSGCQNGPCRADIKCGRNANGELCPNNMCCSQWGYCGLGSEFCGNGCQSGACCPEKRCGKQAGGDKCPNNFCCSAGGYCGLGGNYCGSGCQSGGCYKGGDGMAAILANNQSVSFEGIIESVAELV.

The signal sequence occupies residues 1–28; sequence MTMTSTTTKAMAMAAAVLAAAAVAATNA. Gln-29 carries the pyrrolidone carboxylic acid modification. 4 consecutive Chitin-binding type-1 domains span residues 29-70, 71-113, 114-156, and 157-199; these read QTCG…ACCS, SQRC…PCRA, DIKC…ACCP, and EKRC…GCYK. Intrachain disulfides connect Cys-31/Cys-46, Cys-40/Cys-52, Cys-45/Cys-59, Cys-63/Cys-68, Cys-74/Cys-89, Cys-83/Cys-95, Cys-88/Cys-102, Cys-106/Cys-111, Cys-117/Cys-132, Cys-126/Cys-138, Cys-131/Cys-145, Cys-149/Cys-154, Cys-160/Cys-175, Cys-169/Cys-181, Cys-174/Cys-188, and Cys-192/Cys-197. A substrate-binding site is contributed by 38 to 40; it reads MIC. Position 90–101 (90–101) interacts with substrate; that stretch reads SQYGYCGFGSEY. 142 to 143 is a binding site for substrate; it reads SE. Positions 202–227 are excised as a propeptide; it reads DGMAAILANNQSVSFEGIIESVAELV. Asn-211 carries an N-linked (GlcNAc...) asparagine glycan.

In terms of tissue distribution, confined to root caps, several cell layers at the periphery of the coleorhiza and radicle, and in all cell layers of the coleoptile.

Its function is as follows. N-acetyl-D-glucosamine binding lectin. The chain is Lectin from Oryza sativa subsp. japonica (Rice).